Consider the following 602-residue polypeptide: Elongation factor 4 (602 aa).

The region spanning 7 to 189 (KYIRNFSIVA…AIVSKVPAPY (183 aa)) is the tr-type G domain. GTP-binding positions include 19 to 24 (DHGKST) and 136 to 139 (NKID).

The protein belongs to the TRAFAC class translation factor GTPase superfamily. Classic translation factor GTPase family. LepA subfamily.

The protein resides in the cell membrane. The enzyme catalyses GTP + H2O = GDP + phosphate + H(+). In terms of biological role, required for accurate and efficient protein synthesis under certain stress conditions. May act as a fidelity factor of the translation reaction, by catalyzing a one-codon backward translocation of tRNAs on improperly translocated ribosomes. Back-translocation proceeds from a post-translocation (POST) complex to a pre-translocation (PRE) complex, thus giving elongation factor G a second chance to translocate the tRNAs correctly. Binds to ribosomes in a GTP-dependent manner. This chain is Elongation factor 4, found in Clostridium botulinum (strain Loch Maree / Type A3).